Reading from the N-terminus, the 280-residue chain is UDP-3-O-acyl-N-acetylglucosamine deacetylase (280 aa).

The Zn(2+) site is built by histidine 79, histidine 237, and aspartate 241. Histidine 264 serves as the catalytic Proton donor.

The protein belongs to the LpxC family. The cofactor is Zn(2+).

The catalysed reaction is a UDP-3-O-[(3R)-3-hydroxyacyl]-N-acetyl-alpha-D-glucosamine + H2O = a UDP-3-O-[(3R)-3-hydroxyacyl]-alpha-D-glucosamine + acetate. Its pathway is glycolipid biosynthesis; lipid IV(A) biosynthesis; lipid IV(A) from (3R)-3-hydroxytetradecanoyl-[acyl-carrier-protein] and UDP-N-acetyl-alpha-D-glucosamine: step 2/6. In terms of biological role, catalyzes the hydrolysis of UDP-3-O-myristoyl-N-acetylglucosamine to form UDP-3-O-myristoylglucosamine and acetate, the committed step in lipid A biosynthesis. The polypeptide is UDP-3-O-acyl-N-acetylglucosamine deacetylase (Chlamydia caviae (strain ATCC VR-813 / DSM 19441 / 03DC25 / GPIC) (Chlamydophila caviae)).